Reading from the N-terminus, the 362-residue chain is uncharacterized protein (362 aa).

Residues 13 to 33 form a helical membrane-spanning segment; the sequence is VLILSVGLNMLFLLLFYSAIF. Residues 314–357 form the LysM domain; sequence EEYVVQDGDSLWLIAKRFGIPMDKIIQKNGLNHHRLFPGKVLKL.

It belongs to the chlamydial CPn_0593/CT_474/TC_0759 family.

Its subcellular location is the membrane. This is an uncharacterized protein from Chlamydia pneumoniae (Chlamydophila pneumoniae).